The sequence spans 340 residues: L-threonine 3-dehydrogenase (340 aa).

Residue C38 coordinates Zn(2+). Residues T40 and H43 each act as charge relay system in the active site. Zn(2+) is bound by residues H63, E64, C93, C96, C99, and C107. NAD(+)-binding positions include I175, D195, R200, 262 to 264, and 286 to 287; these read LGI and IY.

It belongs to the zinc-containing alcohol dehydrogenase family. Homotetramer. It depends on Zn(2+) as a cofactor.

It is found in the cytoplasm. The enzyme catalyses L-threonine + NAD(+) = (2S)-2-amino-3-oxobutanoate + NADH + H(+). Its pathway is amino-acid degradation; L-threonine degradation via oxydo-reductase pathway; glycine from L-threonine: step 1/2. In terms of biological role, catalyzes the NAD(+)-dependent oxidation of L-threonine to 2-amino-3-ketobutyrate. The polypeptide is L-threonine 3-dehydrogenase (Legionella pneumophila subsp. pneumophila (strain Philadelphia 1 / ATCC 33152 / DSM 7513)).